The sequence spans 514 residues: ATP synthase subunit alpha (514 aa).

170–177 serves as a coordination point for ATP; it reads GDRQIGKT.

It belongs to the ATPase alpha/beta chains family. In terms of assembly, F-type ATPases have 2 components, CF(1) - the catalytic core - and CF(0) - the membrane proton channel. CF(1) has five subunits: alpha(3), beta(3), gamma(1), delta(1), epsilon(1). CF(0) has three main subunits: a(1), b(2) and c(9-12). The alpha and beta chains form an alternating ring which encloses part of the gamma chain. CF(1) is attached to CF(0) by a central stalk formed by the gamma and epsilon chains, while a peripheral stalk is formed by the delta and b chains.

Its subcellular location is the cell inner membrane. The catalysed reaction is ATP + H2O + 4 H(+)(in) = ADP + phosphate + 5 H(+)(out). Functionally, produces ATP from ADP in the presence of a proton gradient across the membrane. The alpha chain is a regulatory subunit. This is ATP synthase subunit alpha from Pseudomonas fluorescens (strain Pf0-1).